Here is a 261-residue protein sequence, read N- to C-terminus: Phosphoadenosine phosphosulfate reductase (261 aa).

Belongs to the PAPS reductase family. CysH subfamily.

The catalysed reaction is [thioredoxin]-disulfide + sulfite + adenosine 3',5'-bisphosphate + 2 H(+) = [thioredoxin]-dithiol + 3'-phosphoadenylyl sulfate. It participates in sulfur metabolism; hydrogen sulfide biosynthesis; sulfite from sulfate: step 3/3. Its function is as follows. The NADP dependent reduction of PAPS into sulfite involves thioredoxin which probably plays the role of a thiol carrier. This is Phosphoadenosine phosphosulfate reductase (MET16) from Saccharomyces cerevisiae (strain ATCC 204508 / S288c) (Baker's yeast).